A 149-amino-acid polypeptide reads, in one-letter code: D-aminoacyl-tRNA deacylase (149 aa).

The short motif at 137–138 (GP) is the Gly-cisPro motif, important for rejection of L-amino acids element.

The protein belongs to the DTD family. Homodimer.

Its subcellular location is the cytoplasm. It catalyses the reaction glycyl-tRNA(Ala) + H2O = tRNA(Ala) + glycine + H(+). The enzyme catalyses a D-aminoacyl-tRNA + H2O = a tRNA + a D-alpha-amino acid + H(+). Functionally, an aminoacyl-tRNA editing enzyme that deacylates mischarged D-aminoacyl-tRNAs. Also deacylates mischarged glycyl-tRNA(Ala), protecting cells against glycine mischarging by AlaRS. Acts via tRNA-based rather than protein-based catalysis; rejects L-amino acids rather than detecting D-amino acids in the active site. By recycling D-aminoacyl-tRNA to D-amino acids and free tRNA molecules, this enzyme counteracts the toxicity associated with the formation of D-aminoacyl-tRNA entities in vivo and helps enforce protein L-homochirality. The chain is D-aminoacyl-tRNA deacylase from Clostridium beijerinckii (strain ATCC 51743 / NCIMB 8052) (Clostridium acetobutylicum).